The following is a 192-amino-acid chain: dTTP/UTP pyrophosphatase (192 aa).

The Proton acceptor role is filled by D72.

It belongs to the Maf family. YhdE subfamily. The cofactor is a divalent metal cation.

The protein resides in the cytoplasm. It catalyses the reaction dTTP + H2O = dTMP + diphosphate + H(+). The catalysed reaction is UTP + H2O = UMP + diphosphate + H(+). Its function is as follows. Nucleoside triphosphate pyrophosphatase that hydrolyzes dTTP and UTP. May have a dual role in cell division arrest and in preventing the incorporation of modified nucleotides into cellular nucleic acids. This chain is dTTP/UTP pyrophosphatase, found in Geobacter metallireducens (strain ATCC 53774 / DSM 7210 / GS-15).